Here is a 344-residue protein sequence, read N- to C-terminus: Anthranilate phosphoribosyltransferase (344 aa).

5-phospho-alpha-D-ribose 1-diphosphate contacts are provided by residues Gly-83, 86 to 87 (GD), Thr-91, 93 to 96 (NIST), 111 to 119 (KHGGRSVSS), and Ser-123. Gly-83 contributes to the anthranilate binding site. Ser-95 contributes to the Mg(2+) binding site. An anthranilate-binding site is contributed by Arg-169. Mg(2+) contacts are provided by Asp-228 and Glu-229.

The protein belongs to the anthranilate phosphoribosyltransferase family. Homodimer. Mg(2+) serves as cofactor.

The catalysed reaction is N-(5-phospho-beta-D-ribosyl)anthranilate + diphosphate = 5-phospho-alpha-D-ribose 1-diphosphate + anthranilate. It participates in amino-acid biosynthesis; L-tryptophan biosynthesis; L-tryptophan from chorismate: step 2/5. In terms of biological role, catalyzes the transfer of the phosphoribosyl group of 5-phosphorylribose-1-pyrophosphate (PRPP) to anthranilate to yield N-(5'-phosphoribosyl)-anthranilate (PRA). This chain is Anthranilate phosphoribosyltransferase, found in Methylibium petroleiphilum (strain ATCC BAA-1232 / LMG 22953 / PM1).